A 49-amino-acid polypeptide reads, in one-letter code: Large ribosomal subunit protein bL33 (49 aa).

This sequence belongs to the bacterial ribosomal protein bL33 family.

This chain is Large ribosomal subunit protein bL33, found in Clostridium perfringens (strain ATCC 13124 / DSM 756 / JCM 1290 / NCIMB 6125 / NCTC 8237 / Type A).